The primary structure comprises 497 residues: Type II secretion system protein E (497 aa).

An ATP-binding site is contributed by 255 to 262; sequence GPTGSGKS. Positions 388, 391, 419, and 422 each coordinate Zn(2+).

This sequence belongs to the GSP E family. As to quaternary structure, forms homooligomers; most probably hexamers. Interacts with PulL/GspL. Requires Zn(2+) as cofactor.

It is found in the cell inner membrane. It carries out the reaction ATP + H2O + cellular proteinSide 1 = ADP + phosphate + cellular proteinSide 2.. Functionally, ATPase component of the type II secretion system required for the energy-dependent secretion of extracellular factors such as proteases and toxins from the periplasm. Acts as a molecular motor to provide the energy that is required for assembly of the pseudopilus and the extrusion of substrates generated in the cytoplasm. This chain is Type II secretion system protein E (pulE), found in Klebsiella pneumoniae.